Here is a 985-residue protein sequence, read N- to C-terminus: Ephrin type-B receptor 1-A (985 aa).

An N-terminal signal peptide occupies residues 1 to 19; it reads MELNVLLLLLCLSGGQVGA. The Extracellular segment spans residues 20-542; that stretch reads VEETLMDTRT…YKSELREQLP (523 aa). Residues 21–203 form the Eph LBD domain; sequence EETLMDTRTA…FFKEMPSVVQ (183 aa). 2 consecutive Fibronectin type-III domains span residues 324 to 434 and 435 to 532; these read VPSG…TNQA and APSS…TAED. N-linked (GlcNAc...) asparagine glycans are attached at residues N336, N428, and N482. Residues 543–563 traverse the membrane as a helical segment; the sequence is LTGSAAAGVVFIVSLVAISIV. The Cytoplasmic segment spans residues 564 to 985; it reads CSRKRTYSKE…QITQSPTSIA (422 aa). One can recognise a Protein kinase domain in the interval 620-883; sequence VKIEEVIGAG…EIVNTLRPMI (264 aa). Residues 626-634 and K652 contribute to the ATP site; that span reads IGAGEFGEV. Catalysis depends on D745, which acts as the Proton acceptor. The SAM domain maps to 912–976; that stretch reads SAFTSVDDWL…LNSIQSMRVQ (65 aa). The PDZ-binding signature appears at 983–985; that stretch reads SIA.

Belongs to the protein kinase superfamily. Tyr protein kinase family. Ephrin receptor subfamily. As to quaternary structure, heterotetramer upon binding of the ligand. The heterotetramer is composed of an ephrin dimer and a receptor dimer. Oligomerization is probably required to induce biological responses. In terms of processing, phosphorylated. Autophosphorylation is stimulated by ligands.

Its subcellular location is the cell membrane. It is found in the early endosome membrane. The protein localises to the cell projection. The protein resides in the dendrite. It carries out the reaction L-tyrosyl-[protein] + ATP = O-phospho-L-tyrosyl-[protein] + ADP + H(+). In terms of biological role, receptor tyrosine kinase which binds promiscuously transmembrane ephrin-B family ligands residing on adjacent cells, leading to contact-dependent bidirectional signaling into neighboring cells. The signaling pathway downstream of the receptor is referred to as forward signaling while the signaling pathway downstream of the ephrin ligand is referred to as reverse signaling. May play a role in axon guidance during nervous system development. May also play an important redundant role with other ephrin-B receptors in development and maturation of dendritic spines and synapse formation. More generally, may play a role in targeted cell migration and adhesion. Upon activation by ephrin-B ligands activates the MAPK/ERK and the JNK signaling cascades to regulate cell migration and adhesion respectively. This is Ephrin type-B receptor 1-A (ephb1-a) from Xenopus laevis (African clawed frog).